We begin with the raw amino-acid sequence, 500 residues long: Alpha-L-arabinofuranosidase (500 aa).

Positions 1-21 (MLSNARIIAAGCIAAGSLVAA) are cleaved as a signal peptide. Asn467 carries an N-linked (GlcNAc...) asparagine glycan.

This sequence belongs to the glycosyl hydrolase 54 family.

The catalysed reaction is Hydrolysis of terminal non-reducing alpha-L-arabinofuranoside residues in alpha-L-arabinosides.. It participates in glycan metabolism; L-arabinan degradation. The chain is Alpha-L-arabinofuranosidase (abf1) from Hypocrea jecorina (Trichoderma reesei).